The chain runs to 109 residues: MPFLRIKIYSTDLEELNRVVEKIKEIVKQTGVKMRGPIPLPTKILRVPVLRITGHRGTKIWDTYQMRIHRRIIDIATDDRTIKLLMRTPLITKPEKIQIQLKYIKDKNL.

This sequence belongs to the universal ribosomal protein uS10 family. In terms of assembly, part of the 30S ribosomal subunit.

Involved in the binding of tRNA to the ribosomes. The polypeptide is Small ribosomal subunit protein uS10 (Nanoarchaeum equitans (strain Kin4-M)).